We begin with the raw amino-acid sequence, 211 residues long: MSGTLVLVRHGQSDWNLKNLFTGWKDPDLTELGIQEANAGGAALAEYGIKFDVAYTSALVRAQHTLKLILDKVGQPDLQTIRDQALNERDYGDLSGLNKDDARAKWGEEQVHVWRRSYDVPPPGGESLRDTGARVWPYYLTEILPRVLHGEKVLVAAHGNSLRSLVMVLDKLTKEGVLALNLATGVPMVYKLHADSTVASKEVLGDMSGAH.

Substrate-binding positions include 9-16, 22-23, Arg61, 88-91, Lys99, 115-116, and 159-160; these read RHGQSDWN, TG, ERDY, RR, and GN. His10 serves as the catalytic Tele-phosphohistidine intermediate. The active-site Proton donor/acceptor is the Glu88.

Belongs to the phosphoglycerate mutase family. BPG-dependent PGAM subfamily. As to quaternary structure, homodimer.

The enzyme catalyses (2R)-2-phosphoglycerate = (2R)-3-phosphoglycerate. It functions in the pathway carbohydrate degradation; glycolysis; pyruvate from D-glyceraldehyde 3-phosphate: step 3/5. Its function is as follows. Catalyzes the interconversion of 2-phosphoglycerate and 3-phosphoglycerate. This is 2,3-bisphosphoglycerate-dependent phosphoglycerate mutase from Rhizobium etli (strain CIAT 652).